We begin with the raw amino-acid sequence, 188 residues long: Molybdopterin synthase catalytic subunit (188 aa).

Low complexity predominate over residues 1–14; the sequence is MATQPPQDQTSTTP. Residues 1–23 are disordered; sequence MATQPPQDQTSTTPSLPPHLDPT. Substrate-binding positions include 134 to 135, Lys150, and 157 to 159; these read HR and KRE.

This sequence belongs to the MoaE family. MOCS2B subfamily. As to quaternary structure, heterotetramer; composed of 2 small (MOCS2A) and 2 large (MOCS2B) subunits.

The protein resides in the cytoplasm. The enzyme catalyses 2 [molybdopterin-synthase sulfur-carrier protein]-C-terminal-Gly-aminoethanethioate + cyclic pyranopterin phosphate + H2O = molybdopterin + 2 [molybdopterin-synthase sulfur-carrier protein]-C-terminal Gly-Gly + 2 H(+). It participates in cofactor biosynthesis; molybdopterin biosynthesis. Its function is as follows. Catalytic subunit of the molybdopterin synthase complex, a complex that catalyzes the conversion of precursor Z into molybdopterin. Acts by mediating the incorporation of 2 sulfur atoms from thiocarboxylated MOCS2A into precursor Z to generate a dithiolene group. The chain is Molybdopterin synthase catalytic subunit from Aspergillus fumigatus (strain ATCC MYA-4609 / CBS 101355 / FGSC A1100 / Af293) (Neosartorya fumigata).